Here is a 64-residue protein sequence, read N- to C-terminus: Temporin-ALf (64 aa).

A signal peptide spans M1 to C22. Residues E23–R46 constitute a propeptide that is removed on maturation. L62 bears the Leucine amide mark.

As to expression, expressed by the skin glands.

It is found in the secreted. Its function is as follows. Antimicrobial peptide with activity against Gram-positive and Gram-negative bacteria and against fungi. Has been tested against S.aureus (MIC=2.5 ug/mL), B.pumilus (MIC=5.0 ug/mL), B.cereus (MIC=30.0 ug/mL), E.coli (MIC=2.5 ug/mL), B.dysenteriae (MIC=5.0 ug/mL), A.cacoaceticus (MIC=30.0 ug/mL), P.aeruginosa (MIC=5.0 ug/mL) and C.albicans (MIC=2.5 ug/mL). Also shows a weak hemolytic activity. In Amolops loloensis (Lolokou Sucker Frog), this protein is Temporin-ALf.